The primary structure comprises 396 residues: Cysteine protease ATG4A (396 aa).

Cysteine 77 acts as the Nucleophile in catalysis. Residues aspartate 276 and histidine 278 contribute to the active site. Residues 390-393 carry the LIR motif; the sequence is FEIL.

Belongs to the peptidase C54 family. In terms of assembly, interacts with ATG9A; the interaction is direct.

It is found in the cytoplasm. It catalyses the reaction [protein]-C-terminal L-amino acid-glycyl-phosphatidylethanolamide + H2O = [protein]-C-terminal L-amino acid-glycine + a 1,2-diacyl-sn-glycero-3-phosphoethanolamine. Inhibited by N-ethylmaleimide. Redox-regulated during autophagy since reducing conditions activate ATG4A whereas an oxidizing environment such as the presence of H(2)O(2) inhibits its activity. Its function is as follows. Cysteine protease that plays a key role in autophagy by mediating both proteolytic activation and delipidation of ATG8 family proteins. The protease activity is required for proteolytic activation of ATG8 family proteins: cleaves the C-terminal amino acid of ATG8 proteins to reveal a C-terminal glycine. Exposure of the glycine at the C-terminus is essential for ATG8 proteins conjugation to phosphatidylethanolamine (PE) and insertion to membranes, which is necessary for autophagy. Preferred substrate is GABARAPL2 followed by MAP1LC3A and GABARAP. Protease activity is also required to counteract formation of high-molecular weight conjugates of ATG8 proteins (ATG8ylation): acts as a deubiquitinating-like enzyme that removes ATG8 conjugated to other proteins, such as ATG3. In addition to the protease activity, also mediates delipidation of ATG8 family proteins. Catalyzes delipidation of PE-conjugated forms of ATG8 proteins during macroautophagy. Compared to ATG4B, the major protein for proteolytic activation of ATG8 proteins, shows weaker ability to cleave the C-terminal amino acid of ATG8 proteins, while it displays stronger delipidation activity. Involved in phagophore growth during mitophagy independently of its protease activity and of ATG8 proteins: acts by regulating ATG9A trafficking to mitochondria and promoting phagophore-endoplasmic reticulum contacts during the lipid transfer phase of mitophagy. The polypeptide is Cysteine protease ATG4A (Mus musculus (Mouse)).